The sequence spans 157 residues: SsrA-binding protein (157 aa).

Belongs to the SmpB family.

The protein localises to the cytoplasm. In terms of biological role, required for rescue of stalled ribosomes mediated by trans-translation. Binds to transfer-messenger RNA (tmRNA), required for stable association of tmRNA with ribosomes. tmRNA and SmpB together mimic tRNA shape, replacing the anticodon stem-loop with SmpB. tmRNA is encoded by the ssrA gene; the 2 termini fold to resemble tRNA(Ala) and it encodes a 'tag peptide', a short internal open reading frame. During trans-translation Ala-aminoacylated tmRNA acts like a tRNA, entering the A-site of stalled ribosomes, displacing the stalled mRNA. The ribosome then switches to translate the ORF on the tmRNA; the nascent peptide is terminated with the 'tag peptide' encoded by the tmRNA and targeted for degradation. The ribosome is freed to recommence translation, which seems to be the essential function of trans-translation. The polypeptide is SsrA-binding protein (Bacillus licheniformis (strain ATCC 14580 / DSM 13 / JCM 2505 / CCUG 7422 / NBRC 12200 / NCIMB 9375 / NCTC 10341 / NRRL NRS-1264 / Gibson 46)).